We begin with the raw amino-acid sequence, 355 residues long: N6-mAMP deaminase (355 aa).

Positions 13 and 15 each coordinate Zn(2+). N(6)-methyl-AMP-binding positions include histidine 15, asparagine 17, histidine 65, 97-100, aspartate 160, and glycine 190; that span reads TTPK. Histidine 217 is a Zn(2+) binding site. 3 residues coordinate N(6)-methyl-AMP: glutamate 220, aspartate 295, and aspartate 296. Glutamate 220 acts as the Proton donor in catalysis. Zn(2+) is bound at residue aspartate 295.

Belongs to the metallo-dependent hydrolases superfamily. Adenosine and AMP deaminases family. As to quaternary structure, monomer. It depends on Zn(2+) as a cofactor.

It localises to the cytoplasm. Its subcellular location is the cytosol. It catalyses the reaction N(6)-methyl-AMP + H2O + H(+) = IMP + methylamine. Its function is as follows. Catalyzes the hydrolysis of the free cytosolic methylated adenosine nucleotide N(6)-methyl-AMP (N6-mAMP) to produce inositol monophosphate (IMP) and methylamine. Is required for the catabolism of cytosolic N6-mAMP, which is derived from the degradation of mRNA containing N6-methylated adenine (m6A). Does not possess deaminase activity toward adenosine, AMP, N6-methyladenosine, or N6-mATP in vitro. The protein is N6-mAMP deaminase of Arabidopsis thaliana (Mouse-ear cress).